Reading from the N-terminus, the 1070-residue chain is DNA-directed RNA polymerase subunit beta (1070 aa).

It belongs to the RNA polymerase beta chain family. In terms of assembly, in plastids the minimal PEP RNA polymerase catalytic core is composed of four subunits: alpha, beta, beta', and beta''. When a (nuclear-encoded) sigma factor is associated with the core the holoenzyme is formed, which can initiate transcription.

It localises to the plastid. Its subcellular location is the chloroplast. The catalysed reaction is RNA(n) + a ribonucleoside 5'-triphosphate = RNA(n+1) + diphosphate. In terms of biological role, DNA-dependent RNA polymerase catalyzes the transcription of DNA into RNA using the four ribonucleoside triphosphates as substrates. This chain is DNA-directed RNA polymerase subunit beta, found in Buxus microphylla (Littleleaf boxwood).